The following is a 261-amino-acid chain: Precorrin-6A reductase (261 aa).

This sequence belongs to the precorrin-6x reductase family.

It catalyses the reaction precorrin-6B + NADP(+) = precorrin-6A + NADPH + 2 H(+). It participates in cofactor biosynthesis; adenosylcobalamin biosynthesis; cob(II)yrinate a,c-diamide from precorrin-2 (aerobic route): step 6/10. Functionally, catalyzes the reduction of the macrocycle of precorrin-6X into precorrin-6Y. The polypeptide is Precorrin-6A reductase (cobK) (Sinorhizobium sp).